A 420-amino-acid polypeptide reads, in one-letter code: Vacuolar amino acid transporter 5 (420 aa).

At 1-19 (MSGYSPLSSGPADVHIGKA) the chain is on the cytoplasmic side. Residues 20-40 (GFFSSVINLANTILGAGILSL) traverse the membrane as a helical segment. At 41-49 (PNAFTKTGL) the chain is on the vacuolar side. A helical transmembrane segment spans residues 50-70 (LFGCLTIVFSAFASFLGLYFV). Over 71–96 (SQCAARLPRGKASFAAVAKHTFPSLA) the chain is Cytoplasmic. The helical transmembrane segment at 97 to 117 (VVFDASIAVKCFGVAVSYLVI) threads the bilayer. The Vacuolar portion of the chain corresponds to 118–141 (VGDLMPQIAPSLGLSSPMFLRRQT). The chain crosses the membrane as a helical span at residues 142–162 (WIVFALFVLTPLSFLKRLDSL). Over 163–166 (RHTS) the chain is Cytoplasmic. A helical membrane pass occupies residues 167-187 (VISLIALCYLVFIVLYHFIIG). At 188–195 (DTVKGEIR) the chain is on the vacuolar side. The chain crosses the membrane as a helical span at residues 196–216 (YFVPESGFGYLSVLPVFVFGF). The Cytoplasmic portion of the chain corresponds to 217–240 (TCHQNAFSVINEVRNFSQGFVNFT). A helical membrane pass occupies residues 241–261 (MFTAIISSTLLYLLVAITGYL). The Vacuolar portion of the chain corresponds to 262-278 (SFGSLASGNIIAMYDNT). The chain crosses the membrane as a helical span at residues 279-299 (SIWIIGGKLAIVVLVLFSYPL). The Cytoplasmic portion of the chain corresponds to 300–326 (QCHPCRNSVYQAIRRSYSAHDMSDGYH). The helical transmembrane segment at 327 to 347 (AVITLCILLFTHSLALLLSSL) threads the bilayer. Topologically, residues 348–349 (EM) are vacuolar. A helical transmembrane segment spans residues 350-370 (VLAFVGSTGSTFISFILPGSL). The Cytoplasmic segment spans residues 371-394 (YYFFSHKVASPGNSSPLQLRISRA). A helical transmembrane segment spans residues 395-415 (FAAGLAIYGTVVMILCLNINI). Over 416–420 (AKLSH) the chain is Vacuolar.

Belongs to the amino acid/polyamine transporter 2 family.

The protein localises to the vacuole membrane. Its function is as follows. Vacuolar amino acid transporter involved in the vacuolar uptake of histidine, glutamate, tyrosine, arginine, lysine, and serine. Required for sporulation. The polypeptide is Vacuolar amino acid transporter 5 (avt5) (Schizosaccharomyces pombe (strain 972 / ATCC 24843) (Fission yeast)).